A 329-amino-acid chain; its full sequence is BTB/POZ domain-containing adapter for CUL3-mediated RhoA degradation protein 1 (329 aa).

Residues 1 to 22 are compositionally biased toward low complexity; that stretch reads MSAEASGPAAAAAPSLEAPKPS. The disordered stretch occupies residues 1-31; the sequence is MSAEASGPAAAAAPSLEAPKPSGLEPGPAAY. Residues 41 to 109 form the BTB domain; it reads KYVKLNVGGS…LRDGSVPLPE (69 aa). Residues 282-303 are disordered; that stretch reads ATGGAAGAGGAGRGEDEENREH.

The protein belongs to the BACURD family. In terms of assembly, homotetramer; forms a two-fold symmetric tetramer in solution. Interacts with CUL3; interaction is direct and forms a 5:5 heterodecamer. Component of the BCR(KCTD13) E3 ubiquitin ligase complex, at least composed of CUL3, KCTD13/BACURD1 and RBX1. Interacts with RHOA; with a preference for RhoA-GDP. Interacts with POLD2 and PCNA. Interacts with SPRTN. Expressed in a wide variety of tissues.

It localises to the nucleus. It participates in protein modification; protein ubiquitination. Its function is as follows. Substrate-specific adapter of a BCR (BTB-CUL3-RBX1) E3 ubiquitin-protein ligase complex required for synaptic transmission. The BCR(KCTD13) E3 ubiquitin ligase complex mediates the ubiquitination of RHOA, leading to its degradation by the proteasome Degradation of RHOA regulates the actin cytoskeleton and promotes synaptic transmission. The protein is BTB/POZ domain-containing adapter for CUL3-mediated RhoA degradation protein 1 (KCTD13) of Homo sapiens (Human).